We begin with the raw amino-acid sequence, 104 residues long: Large ribosomal subunit protein bL21 (104 aa).

It belongs to the bacterial ribosomal protein bL21 family. As to quaternary structure, part of the 50S ribosomal subunit. Contacts protein L20.

Its function is as follows. This protein binds to 23S rRNA in the presence of protein L20. In Tropheryma whipplei (strain TW08/27) (Whipple's bacillus), this protein is Large ribosomal subunit protein bL21.